We begin with the raw amino-acid sequence, 476 residues long: Serine/threonine-protein kinase Chk1 (476 aa).

Positions methionine 1–tyrosine 265 are interaction with CLSPN. Residues tryptophan 9–tyrosine 265 enclose the Protein kinase domain. Residues leucine 15–valine 23 and lysine 38 each bind ATP. Aspartate 130 acts as the Proton acceptor in catalysis. Residue lysine 132 forms a Glycyl lysine isopeptide (Lys-Gly) (interchain with G-Cter in ubiquitin) linkage. The interval lysine 270–leucine 327 is disordered. A phosphoserine mark is found at serine 280, serine 286, serine 296, and serine 301. Positions glycine 281–glutamate 320 are enriched in polar residues. Residue serine 317 is modified to Phosphoserine; by ATM and ATR. Residue serine 331 is modified to Phosphoserine. At serine 345 the chain carries Phosphoserine; by ATM and ATR. The autoinhibitory region stretch occupies residues glutamine 391–threonine 476. Lysine 436 participates in a covalent cross-link: Glycyl lysine isopeptide (Lys-Gly) (interchain with G-Cter in ubiquitin). Serine 467 and serine 468 each carry phosphoserine.

The protein belongs to the protein kinase superfamily. CAMK Ser/Thr protein kinase family. NIM1 subfamily. In terms of assembly, interacts (phosphorylated by ATR) with RAD51. Interacts with and phosphorylates CLSPN, an adapter protein that regulates the ATR-dependent phosphorylation of CHEK1. Interacts with BRCA1. Interacts with and phosphorylates CDC25A, CDC25B and CDC25C. Interacts with FBXO6, which regulates CHEK1. Interacts with PPM1D, which regulates CHEK1 through dephosphorylation. Interacts with TIMELESS; DNA damage-dependent. Interacts with FEM1B; activates CHEK1 in response to stress. Interacts with TLK1. Interacts with XPO1 and YWHAZ. Interacts with CDK5RAP3; antagonizes CHEK1. As to quaternary structure, isoform 1 associates with isoform 2, the interaction is disrupted upon phosphorylation by ATR. Phosphorylated by ATR in a RAD17-dependent manner in response to ultraviolet irradiation and inhibition of DNA replication. Phosphorylated by ATM in response to ionizing irradiation. ATM and ATR can both phosphorylate Ser-317 and Ser-345 and this results in enhanced kinase activity. Phosphorylation at Ser-345 induces a change in the conformation of the protein, activates the kinase activity and is a prerequisite for interaction with FBXO6 and subsequent ubiquitination at Lys-436. Phosphorylation at Ser-345 also increases binding to 14-3-3 proteins and promotes nuclear retention. Conversely, dephosphorylation at Ser-345 by PPM1D may contribute to exit from checkpoint mediated cell cycle arrest. Phosphorylation at Ser-280 by AKT1/PKB, may promote mono and/or diubiquitination. Also phosphorylated at undefined residues during mitotic arrest, resulting in decreased activity. Post-translationally, ubiquitinated. Mono or diubiquitination promotes nuclear exclusion. The activated form (phosphorylated on Ser-345) is polyubiquitinated at Lys-436 by some SCF-type E3 ubiquitin ligase complex containing FBXO6 promoting its degradation. Ubiquitination and degradation are required to terminate the checkpoint and ensure that activated CHEK1 does not accumulate as cells progress through S phase, when replication forks encounter transient impediments during normal DNA replication. 'Lys-63'-mediated ubiquitination by TRAF4 at Lys-132 activates cell cycle arrest and activation of DNA repair. In terms of processing, proteolytically cleaved at the C-terminus by SPRTN during normal DNA replication, thereby promoting CHEK1 removal from chromatin and activating the protein kinase activity. Expressed ubiquitously with the most abundant expression in thymus, testis, small intestine and colon.

It is found in the nucleus. Its subcellular location is the chromosome. The protein localises to the cytoplasm. The protein resides in the cytoskeleton. It localises to the microtubule organizing center. It is found in the centrosome. It carries out the reaction L-seryl-[protein] + ATP = O-phospho-L-seryl-[protein] + ADP + H(+). The catalysed reaction is L-threonyl-[protein] + ATP = O-phospho-L-threonyl-[protein] + ADP + H(+). With respect to regulation, activated through phosphorylation predominantly by ATR but also by ATM in response to DNA damage or inhibition of DNA replication. Activation is modulated by several mediators including CLSPN, BRCA1 and FEM1B. Proteolytic cleavage at the C-terminus by SPRTN during normal DNA replication activates the protein kinase activity. Functionally, serine/threonine-protein kinase which is required for checkpoint-mediated cell cycle arrest and activation of DNA repair in response to the presence of DNA damage or unreplicated DNA. May also negatively regulate cell cycle progression during unperturbed cell cycles. This regulation is achieved by a number of mechanisms that together help to preserve the integrity of the genome. Recognizes the substrate consensus sequence [R-X-X-S/T]. Binds to and phosphorylates CDC25A, CDC25B and CDC25C. Phosphorylation of CDC25A at 'Ser-178' and 'Thr-507' and phosphorylation of CDC25C at 'Ser-216' creates binding sites for 14-3-3 proteins which inhibit CDC25A and CDC25C. Phosphorylation of CDC25A at 'Ser-76', 'Ser-124', 'Ser-178', 'Ser-279' and 'Ser-293' promotes proteolysis of CDC25A. Phosphorylation of CDC25A at 'Ser-76' primes the protein for subsequent phosphorylation at 'Ser-79', 'Ser-82' and 'Ser-88' by NEK11, which is required for polyubiquitination and degradation of CDCD25A. Inhibition of CDC25 leads to increased inhibitory tyrosine phosphorylation of CDK-cyclin complexes and blocks cell cycle progression. Also phosphorylates NEK6. Binds to and phosphorylates RAD51 at 'Thr-309', which promotes the release of RAD51 from BRCA2 and enhances the association of RAD51 with chromatin, thereby promoting DNA repair by homologous recombination. Phosphorylates multiple sites within the C-terminus of TP53, which promotes activation of TP53 by acetylation and promotes cell cycle arrest and suppression of cellular proliferation. Also promotes repair of DNA cross-links through phosphorylation of FANCE. Binds to and phosphorylates TLK1 at 'Ser-743', which prevents the TLK1-dependent phosphorylation of the chromatin assembly factor ASF1A. This may enhance chromatin assembly both in the presence or absence of DNA damage. May also play a role in replication fork maintenance through regulation of PCNA. May regulate the transcription of genes that regulate cell-cycle progression through the phosphorylation of histones. Phosphorylates histone H3.1 (to form H3T11ph), which leads to epigenetic inhibition of a subset of genes. May also phosphorylate RB1 to promote its interaction with the E2F family of transcription factors and subsequent cell cycle arrest. Phosphorylates SPRTN, promoting SPRTN recruitment to chromatin. Reduces replication stress and activates the G2/M checkpoint, by phosphorylating and inactivating PABIR1/FAM122A and promoting the serine/threonine-protein phosphatase 2A-mediated dephosphorylation and stabilization of WEE1 levels and activity. In terms of biological role, endogenous repressor of isoform 1, interacts with, and antagonizes CHK1 to promote the S to G2/M phase transition. This chain is Serine/threonine-protein kinase Chk1 (CHEK1), found in Homo sapiens (Human).